The chain runs to 134 residues: Putative oxidoreductase CatD (134 aa).

4 helical membrane-spanning segments follow: residues 5-25 (FEIG…VHGL), 46-66 (FMAY…FFGL), 70-90 (IVGV…KLKA), and 91-111 (PFMG…HLAL).

It belongs to the DoxX family.

It localises to the cell membrane. Essential for growth and viability in the presence of catechol and probably involved in the detoxification of catechol. This is Putative oxidoreductase CatD (catD) from Bacillus subtilis (strain 168).